The following is a 520-amino-acid chain: EGF domain-specific O-linked N-acetylglucosamine transferase (520 aa).

The first 16 residues, 1–16, serve as a signal peptide directing secretion; sequence MPILPILIGILHLSLA. Asn52, Asn176, and Asn250 each carry an N-linked (GlcNAc...) asparagine glycan. The Required for optimal activity signature appears at 292-294; it reads DVE. Asn479 carries an N-linked (GlcNAc...) asparagine glycan. Positions 517 to 520 match the Prevents secretion from ER motif; it reads RNEL.

The cofactor is a divalent metal cation.

The protein localises to the endoplasmic reticulum lumen. It carries out the reaction L-seryl-[protein] + UDP-N-acetyl-alpha-D-glucosamine = 3-O-(N-acetyl-beta-D-glucosaminyl)-L-seryl-[protein] + UDP + H(+). The catalysed reaction is L-threonyl-[protein] + UDP-N-acetyl-alpha-D-glucosamine = 3-O-(N-acetyl-beta-D-glucosaminyl)-L-threonyl-[protein] + UDP + H(+). Functionally, catalyzes the transfer of a single N-acetylglucosamine from UDP-GlcNAc to a serine or threonine residue in extracellular proteins resulting in their modification with a beta-linked N-acetylglucosamine (O-GlcNAc). Specifically glycosylates the Thr residue located between the fifth and sixth conserved cysteines of folded EGF-like domains. Involved in epithelial cell adhesion/interaction with the extracellular matrix by mediating glycosylation of proteins in the secretory pathway, such as Dumpy (Dp). This Drosophila melanogaster (Fruit fly) protein is EGF domain-specific O-linked N-acetylglucosamine transferase (Eogt).